The sequence spans 332 residues: 2,3-diketo-L-gulonate reductase (332 aa).

The Proton donor role is filled by His-44. NAD(+)-binding positions include 168–174 (ITMVDMS), 224–225 (WK), and 304–306 (GHE).

Belongs to the LDH2/MDH2 oxidoreductase family. DlgD subfamily. In terms of assembly, homodimer.

It is found in the cytoplasm. It carries out the reaction 3-dehydro-L-gulonate + NAD(+) = 2,3-dioxo-L-gulonate + NADH + H(+). The enzyme catalyses 3-dehydro-L-gulonate + NADP(+) = 2,3-dioxo-L-gulonate + NADPH + H(+). Its function is as follows. Catalyzes the reduction of 2,3-diketo-L-gulonate in the presence of NADH, to form 3-keto-L-gulonate. This Salmonella paratyphi B (strain ATCC BAA-1250 / SPB7) protein is 2,3-diketo-L-gulonate reductase.